Consider the following 492-residue polypeptide: N-succinylglutamate 5-semialdehyde dehydrogenase (492 aa).

220 to 225 is an NAD(+) binding site; the sequence is GSASTG. Residues Glu-243 and Cys-277 contribute to the active site.

The protein belongs to the aldehyde dehydrogenase family. AstD subfamily.

It catalyses the reaction N-succinyl-L-glutamate 5-semialdehyde + NAD(+) + H2O = N-succinyl-L-glutamate + NADH + 2 H(+). The protein operates within amino-acid degradation; L-arginine degradation via AST pathway; L-glutamate and succinate from L-arginine: step 4/5. In terms of biological role, catalyzes the NAD-dependent reduction of succinylglutamate semialdehyde into succinylglutamate. The sequence is that of N-succinylglutamate 5-semialdehyde dehydrogenase from Salmonella schwarzengrund (strain CVM19633).